We begin with the raw amino-acid sequence, 122 residues long: Ribosome-binding factor A (122 aa).

Belongs to the RbfA family. Monomer. Binds 30S ribosomal subunits, but not 50S ribosomal subunits or 70S ribosomes.

It is found in the cytoplasm. In terms of biological role, one of several proteins that assist in the late maturation steps of the functional core of the 30S ribosomal subunit. Associates with free 30S ribosomal subunits (but not with 30S subunits that are part of 70S ribosomes or polysomes). Required for efficient processing of 16S rRNA. May interact with the 5'-terminal helix region of 16S rRNA. This chain is Ribosome-binding factor A, found in Streptococcus agalactiae serotype III (strain NEM316).